The chain runs to 135 residues: BolA-like protein 1 (135 aa).

At S81 the chain carries Phosphoserine. Residues 114 to 135 are disordered; sequence WKENPQLDTSPACLGGSKKSRN.

This sequence belongs to the BolA/IbaG family. Interacts with GLRX5.

Its subcellular location is the mitochondrion. In terms of biological role, acts as a mitochondrial iron-sulfur (Fe-S) cluster assembly factor that facilitates (Fe-S) cluster insertion into a subset of mitochondrial proteins. Probably acts together with the monothiol glutaredoxin GLRX5. May protect cells against oxidative stress. In Bos taurus (Bovine), this protein is BolA-like protein 1 (BOLA1).